The sequence spans 1178 residues: Pyruvate carboxylase, mitochondrial (1178 aa).

Residues 1-20 (MLKFQTVRGGLRLLGVRRSS) constitute a mitochondrion transit peptide. Residues K35 and K39 each carry the N6-acetyllysine modification. Residues 36–486 (PIKKVMVANR…DTQFIDENPE (451 aa)) form the Biotin carboxylation domain. N6-acetyllysine; alternate is present on K79. The residue at position 79 (K79) is an N6-succinyllysine; alternate. 2 positions are modified to N6-acetyllysine: K148 and K152. ATP contacts are provided by K152 and E236. Residues 156 to 353 (RAIAIAAGVP…LVHAQIHVSE (198 aa)) form the ATP-grasp domain. K241 is modified (N6-acetyllysine). H271 contacts ATP. K297, K316, and K319 each carry N6-acetyllysine. The active site involves R328. Position 434 is an N6-acetyllysine (K434). At K442 the chain carries N6-succinyllysine. Positions 563–832 (LLLMDTTFRD…DTEVPLERVF (270 aa)) constitute a Pyruvate carboxyltransferase domain. 571 to 575 (RDAHQ) is a substrate binding site. Mn(2+) is bound at residue D572. An N6-acetyllysine modification is found at K589. R644 provides a ligand contact to substrate. 2 positions are modified to N6-acetyllysine: K661 and K717. K741 contributes to the Mn(2+) binding site. An N6-carboxylysine modification is found at K741. K748 is modified (N6-acetyllysine). Residues H771 and H773 each contribute to the Mn(2+) site. An N6-acetyllysine modification is found at K892. T908 is a substrate binding site. K969 carries the post-translational modification N6-acetyllysine. N6-acetyllysine; alternate is present on K988. K988 bears the N6-succinyllysine; alternate mark. An N6-acetyllysine modification is found at K992. Position 1003 is a phosphothreonine (T1003). N6-acetyllysine occurs at positions 1061, 1090, and 1124. The 70-residue stretch at 1109 to 1178 (KGQIGAPMPG…EGDDLILEIE (70 aa)) folds into the Biotinyl-binding domain. Residue K1144 is modified to N6-biotinyllysine.

In terms of assembly, homotetramer. Interacts (via the biotin carboxylation domain) with SIRT4. Biotin serves as cofactor. The cofactor is Mn(2+). Acetylation of Lys-748 might play a role in catalytic activity regulation.

The protein localises to the mitochondrion matrix. It catalyses the reaction hydrogencarbonate + pyruvate + ATP = oxaloacetate + ADP + phosphate + H(+). The protein operates within carbohydrate biosynthesis; gluconeogenesis. In terms of biological role, pyruvate carboxylase catalyzes a 2-step reaction, involving the ATP-dependent carboxylation of the covalently attached biotin in the first step and the transfer of the carboxyl group to pyruvate in the second. Catalyzes in a tissue specific manner, the initial reactions of glucose (liver, kidney) and lipid (adipose tissue, liver, brain) synthesis from pyruvate. The sequence is that of Pyruvate carboxylase, mitochondrial (Pc) from Rattus norvegicus (Rat).